The primary structure comprises 251 residues: Methionine aminopeptidase (251 aa).

H79 contacts substrate. The a divalent metal cation site is built by D96, D107, and H170. H177 is a substrate binding site. A divalent metal cation-binding residues include E204 and E235.

It belongs to the peptidase M24A family. Methionine aminopeptidase type 1 subfamily. Monomer. The cofactor is Co(2+). Zn(2+) is required as a cofactor. It depends on Mn(2+) as a cofactor. Fe(2+) serves as cofactor.

The catalysed reaction is Release of N-terminal amino acids, preferentially methionine, from peptides and arylamides.. Its function is as follows. Removes the N-terminal methionine from nascent proteins. The N-terminal methionine is often cleaved when the second residue in the primary sequence is small and uncharged (Met-Ala-, Cys, Gly, Pro, Ser, Thr, or Val). Requires deformylation of the N(alpha)-formylated initiator methionine before it can be hydrolyzed. The chain is Methionine aminopeptidase from Borreliella burgdorferi (strain ATCC 35210 / DSM 4680 / CIP 102532 / B31) (Borrelia burgdorferi).